We begin with the raw amino-acid sequence, 86 residues long: Small ribosomal subunit protein bS20 (86 aa).

The interval 1 to 25 (MANIKSAIKRAKTSEKRRVANSQEK) is disordered.

This sequence belongs to the bacterial ribosomal protein bS20 family.

Its function is as follows. Binds directly to 16S ribosomal RNA. The protein is Small ribosomal subunit protein bS20 of Exiguobacterium sp. (strain ATCC BAA-1283 / AT1b).